A 158-amino-acid polypeptide reads, in one-letter code: Transcription elongation factor GreA (158 aa).

The stretch at 47-74 forms a coiled coil; sequence AEYHAAKEEQSHNEGRINELEDKLARAD.

This sequence belongs to the GreA/GreB family.

Necessary for efficient RNA polymerase transcription elongation past template-encoded arresting sites. The arresting sites in DNA have the property of trapping a certain fraction of elongating RNA polymerases that pass through, resulting in locked ternary complexes. Cleavage of the nascent transcript by cleavage factors such as GreA or GreB allows the resumption of elongation from the new 3'terminus. GreA releases sequences of 2 to 3 nucleotides. The chain is Transcription elongation factor GreA from Rhodopseudomonas palustris (strain ATCC BAA-98 / CGA009).